The primary structure comprises 569 residues: Dihydroxy-acid dehydratase (569 aa).

Residue Cys61 participates in [2Fe-2S] cluster binding. Position 93 (Asp93) interacts with Mg(2+). Position 134 (Cys134) interacts with [2Fe-2S] cluster. The Mg(2+) site is built by Asp135 and Lys136. N6-carboxylysine is present on Lys136. Cys211 lines the [2Fe-2S] cluster pocket. Residue Glu462 coordinates Mg(2+). The active-site Proton acceptor is the Ser488.

The protein belongs to the IlvD/Edd family. Homodimer. It depends on [2Fe-2S] cluster as a cofactor. Mg(2+) is required as a cofactor.

The catalysed reaction is (2R)-2,3-dihydroxy-3-methylbutanoate = 3-methyl-2-oxobutanoate + H2O. The enzyme catalyses (2R,3R)-2,3-dihydroxy-3-methylpentanoate = (S)-3-methyl-2-oxopentanoate + H2O. It functions in the pathway amino-acid biosynthesis; L-isoleucine biosynthesis; L-isoleucine from 2-oxobutanoate: step 3/4. The protein operates within amino-acid biosynthesis; L-valine biosynthesis; L-valine from pyruvate: step 3/4. Functionally, functions in the biosynthesis of branched-chain amino acids. Catalyzes the dehydration of (2R,3R)-2,3-dihydroxy-3-methylpentanoate (2,3-dihydroxy-3-methylvalerate) into 2-oxo-3-methylpentanoate (2-oxo-3-methylvalerate) and of (2R)-2,3-dihydroxy-3-methylbutanoate (2,3-dihydroxyisovalerate) into 2-oxo-3-methylbutanoate (2-oxoisovalerate), the penultimate precursor to L-isoleucine and L-valine, respectively. This chain is Dihydroxy-acid dehydratase, found in Tropheryma whipplei (strain TW08/27) (Whipple's bacillus).